We begin with the raw amino-acid sequence, 119 residues long: Protein phosphatase EYA4 (119 aa).

This sequence belongs to the HAD-like hydrolase superfamily. EYA family. Mg(2+) serves as cofactor.

The protein localises to the cytoplasm. The protein resides in the nucleus. It catalyses the reaction O-phospho-L-tyrosyl-[protein] + H2O = L-tyrosyl-[protein] + phosphate. Tyrosine phosphatase that specifically dephosphorylates 'Tyr-142' of histone H2AX (H2AXY142ph). 'Tyr-142' phosphorylation of histone H2AX plays a central role in DNA repair and acts as a mark that distinguishes between apoptotic and repair responses to genotoxic stress. Promotes efficient DNA repair by dephosphorylating H2AX, promoting the recruitment of DNA repair complexes containing MDC1. Its function as histone phosphatase probably explains its role in transcription regulation during organogenesis. May be involved in development of the eye. The chain is Protein phosphatase EYA4 (EYA4) from Gallus gallus (Chicken).